We begin with the raw amino-acid sequence, 170 residues long: uncharacterized protein (170 aa).

Transmembrane regions (helical) follow at residues 21–41 (NISL…AAVL), 55–75 (AYTS…TLLL), 86–106 (TGIA…YWLW), 117–137 (ISGV…VSLL), and 143–163 (FSAA…TLLP). Residues 35–161 (IIFAAVLRWT…IMLATLGSTL (127 aa)) form the EamA domain.

It belongs to the EamA transporter family.

The protein resides in the cell membrane. This is an uncharacterized protein from Haemophilus influenzae (strain ATCC 51907 / DSM 11121 / KW20 / Rd).